Here is a 3469-residue protein sequence, read N- to C-terminus: Abnormal spindle-like microcephaly-associated protein homolog (3469 aa).

Residues 1-24 (MATRRAGRSWEVSPSGPRPAAGEA) form a disordered region. A compositionally biased stretch (low complexity) spans 13 to 24 (SPSGPRPAAGEA). 6 positions are modified to phosphoserine: Ser-273, Ser-276, Ser-361, Ser-386, Ser-420, and Ser-599. In terms of domain architecture, Calponin-homology (CH) 1 spans 913–1049 (KTSKDILLAF…LLWKIAFAFQ (137 aa)). Positions 1050 to 1069 (VDISLNLDQLKEEIDFLKHT) form a coiled coil. At Ser-1095 the chain carries Phosphoserine. Residues 1102 to 1253 (SESIKLLMEW…YLSFLCSRLL (152 aa)) form the Calponin-homology (CH) 2 domain. IQ domains are found at residues 1258-1287 (ETRA…QDKA), 1339-1370 (QNES…IILQ), 1385-1414 (YLWA…MLKS), 1529-1560 (KRAA…VLQS), 1574-1605 (LKKI…LVIQ), 1624-1653 (TRSA…SIIK), 1647-1676 (ILTS…ATVK), 1720-1749 (MRES…AAIS), 1743-1774 (QRQA…LVIQ), 1793-1822 (VKRA…AALK), 1816-1845 (QSIA…STIK), 1866-1895 (TRAA…AAVR), 1889-1920 (ERQA…LVIQ), 1939-1970 (LREA…VIIQ), 1962-1993 (QHKC…RLIQ), 2012-2041 (TKAA…AAVT), 2035-2066 (CNRA…IIIQ), 2085-2116 (LKKT…TVIQ), 2108-2139 (LHMA…VIIQ), 2158-2189 (IMKA…TLIQ), 2181-2210 (MQSA…VTRT), 2231-2262 (LRHS…TLIQ), 2304-2333 (VQKA…AATA), 2327-2358 (VHRA…VVIQ), 2377-2408 (QRHS…TLIQ), 2400-2431 (MHSS…VFVQ), 2450-2481 (LKKA…VLIQ), 2523-2554 (QRRS…IIIQ), 2681-2712 (RHLA…AVIQ), 2731-2762 (VQKS…MVAS), 2851-2882 (QKRA…VVLQ), 2901-2930 (IRSS…STIK), 2924-2955 (IKDS…KIQA), 2946-2977 (QVKA…KIIQ), 3021-3050 (RHQA…AALT), 3071-3102 (LKKS…RLLH), 3173-3202 (QNRA…AISR), and 3196-3227 (FNNA…IRLS).

The protein resides in the cytoplasm. It localises to the cytoskeleton. Its subcellular location is the spindle. The protein localises to the nucleus. In terms of biological role, probable role in mitotic spindle regulation and coordination of mitotic processes. May have a preferential role in regulating neurogenesis. This is Abnormal spindle-like microcephaly-associated protein homolog (ASPM) from Canis lupus familiaris (Dog).